The following is a 79-amino-acid chain: Defensin-like protein 54 (79 aa).

The signal sequence occupies residues 1-27; sequence MGIKKTSATVFLVIILTISFSYYDVEA. 4 cysteine pairs are disulfide-bonded: Cys-39–Cys-76, Cys-43–Cys-67, Cys-52–Cys-74, and Cys-56–Cys-75.

The protein belongs to the DEFL family.

The protein localises to the secreted. The sequence is that of Defensin-like protein 54 from Arabidopsis thaliana (Mouse-ear cress).